A 156-amino-acid chain; its full sequence is MSRKGHIKKRDVNPDPIYNSKLVTKVINVIMQDGKKGKAQTIFYQALKKVQLMTKREPLEVFRDALNNIMPVLEVRTRRVGGQNYQVPSEIRPERRQSLGLKWLVKFTKQCNEKTMKDKLAKEIVDASLGHGVSVKKREETHRMAEANKAFAHYRW.

Belongs to the universal ribosomal protein uS7 family. In terms of assembly, part of the 30S ribosomal subunit. Contacts proteins S9 and S11.

One of the primary rRNA binding proteins, it binds directly to 16S rRNA where it nucleates assembly of the head domain of the 30S subunit. Is located at the subunit interface close to the decoding center, probably blocks exit of the E-site tRNA. The chain is Small ribosomal subunit protein uS7 from Phytoplasma australiense.